We begin with the raw amino-acid sequence, 733 residues long: Ribosomal protein S6 kinase alpha-2 (733 aa).

Positions 59–318 (FELLKVLGQG…VEEIKRHPFF (260 aa)) constitute a Protein kinase 1 domain. Residues 65–73 (LGQGSYGKV) and Lys91 each bind ATP. Asp184 functions as the Proton acceptor in the catalytic mechanism. At Ser218 the chain carries Phosphoserine; by PDPK1. The AGC-kinase C-terminal domain occupies 319–388 (VTIDWNKLYR…VASSLVQEPS (70 aa)). At Ser377 the chain carries Phosphoserine. Residues 415 to 672 (YEIKEDIGVG…AVQVLKHPWI (258 aa)) form the Protein kinase 2 domain. Residues 421-429 (IGVGSYSVC) and Lys444 contribute to the ATP site. Asp532 (proton acceptor) is an active-site residue.

The protein belongs to the protein kinase superfamily. AGC Ser/Thr protein kinase family. S6 kinase subfamily. Forms a complex with either MAPK1/ERK2 or MAPK3/ERK1 in quiescent cells. Transiently dissociates following mitogenic stimulation. Interacts with FBXO5; cooperate to induce the metaphase arrest of early blastomeres; increases and stabilizes interaction of FBXO5 with CDC20. The cofactor is Mg(2+). Post-translationally, activated by phosphorylation at Ser-218 by PDPK1. Autophosphorylated on Ser-377, as part of the activation process. May be phosphorylated at Thr-356 and Ser-360 by MAPK1/ERK2 and MAPK3/ERK1. In terms of processing, N-terminal myristoylation results in an activated kinase in the absence of added growth factors.

It localises to the nucleus. Its subcellular location is the cytoplasm. It carries out the reaction L-seryl-[protein] + ATP = O-phospho-L-seryl-[protein] + ADP + H(+). The catalysed reaction is L-threonyl-[protein] + ATP = O-phospho-L-threonyl-[protein] + ADP + H(+). Its activity is regulated as follows. Upon extracellular signal or mitogen stimulation, phosphorylated at Thr-570 in the C-terminal kinase domain (CTKD) by MAPK1/ERK2 and MAPK3/ERK1. The activated CTKD then autophosphorylates Ser-377, allowing binding of PDPK1, which in turn phosphorylates Ser-218 in the N-terminal kinase domain (NTDK) leading to the full activation of the protein and subsequent phosphorylation of the substrates by the NTKD. Functionally, serine/threonine-protein kinase that acts downstream of ERK (MAPK1/ERK2 and MAPK3/ERK1) signaling and mediates mitogenic and stress-induced activation of transcription factors, regulates translation, and mediates cellular proliferation, survival, and differentiation. May function as tumor suppressor in epithelial ovarian cancer cells. This chain is Ribosomal protein S6 kinase alpha-2 (Rps6ka2), found in Mus musculus (Mouse).